We begin with the raw amino-acid sequence, 493 residues long: Exosome complex component Rrp41 (493 aa).

2 disordered regions span residues 244-264 (VSEETAPEKGAEKEVLEPSPV) and 291-493 (LASE…EKDE). Positions 249-259 (APEKGAEKEVL) are enriched in basic and acidic residues. Over residues 297–377 (PDFEDELEEE…ALEEETELEA (81 aa)) the composition is skewed to acidic residues. Positions 383 to 400 (PELKEFDEIEARLEKEDA) are enriched in basic and acidic residues. The segment covering 401–471 (SIEAEEEIEP…EAEEEPEEEK (71 aa)) has biased composition (acidic residues). Positions 472 to 493 (SEGPWKVVKDPSEAGTRGEKDE) are enriched in basic and acidic residues.

Belongs to the RNase PH family. Rrp41 subfamily. Component of the archaeal exosome complex. Forms a hexameric ring-like arrangement composed of 3 Rrp41-Rrp42 heterodimers. The hexameric ring associates with a trimer of Rrp4 and/or Csl4 subunits.

It localises to the cytoplasm. In terms of biological role, catalytic component of the exosome, which is a complex involved in RNA degradation. Has 3'-&gt;5' exoribonuclease activity. Can also synthesize heteromeric RNA-tails. This is Exosome complex component Rrp41 from Methanosarcina mazei (strain ATCC BAA-159 / DSM 3647 / Goe1 / Go1 / JCM 11833 / OCM 88) (Methanosarcina frisia).